A 128-amino-acid chain; its full sequence is Large ribosomal subunit protein bL20c (128 aa).

The protein belongs to the bacterial ribosomal protein bL20 family. In terms of assembly, component of the chloroplast large ribosomal subunit (LSU). Mature 70S chloroplast ribosomes of higher plants consist of a small (30S) and a large (50S) subunit. The 30S small subunit contains 1 molecule of ribosomal RNA (16S rRNA) and 24 different proteins. The 50S large subunit contains 3 rRNA molecules (23S, 5S and 4.5S rRNA) and 33 different proteins.

The protein localises to the plastid. It localises to the chloroplast. Functionally, component of the chloroplast ribosome (chloro-ribosome), a dedicated translation machinery responsible for the synthesis of chloroplast genome-encoded proteins, including proteins of the transcription and translation machinery and components of the photosynthetic apparatus. The protein is Large ribosomal subunit protein bL20c (rpl20) of Spinacia oleracea (Spinach).